Here is a 356-residue protein sequence, read N- to C-terminus: UDP-N-acetylglucosamine--N-acetylmuramyl-(pentapeptide) pyrophosphoryl-undecaprenol N-acetylglucosamine transferase (356 aa).

Residues 13-15, asparagine 125, arginine 161, serine 189, isoleucine 243, and glutamine 288 contribute to the UDP-N-acetyl-alpha-D-glucosamine site; that span reads TGG.

This sequence belongs to the glycosyltransferase 28 family. MurG subfamily.

Its subcellular location is the cell inner membrane. It carries out the reaction di-trans,octa-cis-undecaprenyl diphospho-N-acetyl-alpha-D-muramoyl-L-alanyl-D-glutamyl-meso-2,6-diaminopimeloyl-D-alanyl-D-alanine + UDP-N-acetyl-alpha-D-glucosamine = di-trans,octa-cis-undecaprenyl diphospho-[N-acetyl-alpha-D-glucosaminyl-(1-&gt;4)]-N-acetyl-alpha-D-muramoyl-L-alanyl-D-glutamyl-meso-2,6-diaminopimeloyl-D-alanyl-D-alanine + UDP + H(+). Its pathway is cell wall biogenesis; peptidoglycan biosynthesis. Cell wall formation. Catalyzes the transfer of a GlcNAc subunit on undecaprenyl-pyrophosphoryl-MurNAc-pentapeptide (lipid intermediate I) to form undecaprenyl-pyrophosphoryl-MurNAc-(pentapeptide)GlcNAc (lipid intermediate II). This Cupriavidus metallidurans (strain ATCC 43123 / DSM 2839 / NBRC 102507 / CH34) (Ralstonia metallidurans) protein is UDP-N-acetylglucosamine--N-acetylmuramyl-(pentapeptide) pyrophosphoryl-undecaprenol N-acetylglucosamine transferase.